The primary structure comprises 314 residues: Homoserine O-acetyltransferase (314 aa).

C142 serves as the catalytic Acyl-thioester intermediate. Residues K163 and S192 each coordinate substrate. H235 (proton acceptor) is an active-site residue. E237 is an active-site residue. A substrate-binding site is contributed by R249.

The protein belongs to the MetA family.

The protein resides in the cytoplasm. The enzyme catalyses L-homoserine + acetyl-CoA = O-acetyl-L-homoserine + CoA. It participates in amino-acid biosynthesis; L-methionine biosynthesis via de novo pathway; O-acetyl-L-homoserine from L-homoserine: step 1/1. In terms of biological role, transfers an acetyl group from acetyl-CoA to L-homoserine, forming acetyl-L-homoserine. The protein is Homoserine O-acetyltransferase of Streptococcus pneumoniae (strain Taiwan19F-14).